The sequence spans 274 residues: 2,3,4,5-tetrahydropyridine-2,6-dicarboxylate N-succinyltransferase (274 aa).

Arg-104 and Asp-141 together coordinate substrate.

This sequence belongs to the transferase hexapeptide repeat family. As to quaternary structure, homotrimer.

The protein localises to the cytoplasm. It catalyses the reaction (S)-2,3,4,5-tetrahydrodipicolinate + succinyl-CoA + H2O = (S)-2-succinylamino-6-oxoheptanedioate + CoA. The protein operates within amino-acid biosynthesis; L-lysine biosynthesis via DAP pathway; LL-2,6-diaminopimelate from (S)-tetrahydrodipicolinate (succinylase route): step 1/3. The protein is 2,3,4,5-tetrahydropyridine-2,6-dicarboxylate N-succinyltransferase of Enterobacter sp. (strain 638).